A 342-amino-acid polypeptide reads, in one-letter code: Peroxisomal membrane protein import receptor PEX19 (342 aa).

Residues 1-18 are compositionally biased toward acidic residues; it reads MNENEYDNFDDLDDLLDE. Disordered regions lie at residues 1 to 68 and 119 to 141; these read MNEN…DPEL and CSSL…GFKN. Over residues 41 to 54 the composition is skewed to basic and acidic residues; sequence SENKEKNAESKDSD. S62 is subject to Phosphoserine. Residue S304 is modified to Phosphoserine. Positions 321-342 are disordered; it reads IDGNDPNLGNLDKELTDGCKQQ. The span at 331–342 shows a compositional bias: basic and acidic residues; the sequence is LDKELTDGCKQQ. Residue C339 is modified to Cysteine methyl ester. C339 carries the S-farnesyl cysteine lipid modification. The propeptide at 340–342 is removed in mature form; that stretch reads KQQ.

Belongs to the peroxin-19 family. Interacts (farnesylated) with PEX3; farnesylation is required for this interaction. Interacts with PEX2, PEX5, PEX10, PEX11, PEX12, PEX13, PEX14, PEX17, PEX22, PEX25, PEX30 and PEX32; the interaction requires well-defined PEX19-binding sites within the peroxisomal membrane protein targeting signal (mPTS) of the PMPs and is independent on the presence of PEX3. Interacts with VPS1.

The protein localises to the cytoplasm. It is found in the peroxisome membrane. Its subcellular location is the endoplasmic reticulum membrane. In terms of biological role, required for proper post-translational import and stabilization of peroxisomal membrane proteins (PMPs). Acts as a cytosolic import receptor for PMPs and delivers them to the docking factor PEX3 at the peroxisomal membrane for subsequent insertion into the membrane. Acts as a chaperone in stabilizing or maintaining PMPs in the lipid bilayer. Directs PEX17, a peripheral component of the peroxisomal matrix protein translocation machinery, to peroxisomes. Stabilizes VPS1, a protein required for peroxisomal fission, at the peroxisomal membrane. Also acts in conjunction with PEX3 in the formation of peroxisomes from preperoxisomal compartments at the endoplasmic reticulum during de novo peroxisome synthesis, probably via the import of additional PMPs. The sequence is that of Peroxisomal membrane protein import receptor PEX19 (PEX19) from Saccharomyces cerevisiae (strain ATCC 204508 / S288c) (Baker's yeast).